Consider the following 224-residue polypeptide: Large ribosomal subunit protein uL4 (224 aa).

A disordered region spans residues 53–74 (RNRSEVSHSTKKPFKQKGTGNA).

The protein belongs to the universal ribosomal protein uL4 family. Part of the 50S ribosomal subunit.

One of the primary rRNA binding proteins, this protein initially binds near the 5'-end of the 23S rRNA. It is important during the early stages of 50S assembly. It makes multiple contacts with different domains of the 23S rRNA in the assembled 50S subunit and ribosome. Functionally, forms part of the polypeptide exit tunnel. The polypeptide is Large ribosomal subunit protein uL4 (Chlamydia pneumoniae (Chlamydophila pneumoniae)).